We begin with the raw amino-acid sequence, 317 residues long: Ribosomal protein L11 methyltransferase (317 aa).

Positions 158, 179, 201, and 244 each coordinate S-adenosyl-L-methionine.

Belongs to the methyltransferase superfamily. PrmA family.

The protein localises to the cytoplasm. It catalyses the reaction L-lysyl-[protein] + 3 S-adenosyl-L-methionine = N(6),N(6),N(6)-trimethyl-L-lysyl-[protein] + 3 S-adenosyl-L-homocysteine + 3 H(+). Methylates ribosomal protein L11. In Streptococcus pyogenes serotype M49 (strain NZ131), this protein is Ribosomal protein L11 methyltransferase.